Consider the following 307-residue polypeptide: UDP-N-acetylenolpyruvoylglucosamine reductase (307 aa).

The FAD-binding PCMH-type domain occupies Thr33–Gly197. Arg176 is an active-site residue. Residue Ser226 is the Proton donor of the active site. Glu296 is an active-site residue.

This sequence belongs to the MurB family. FAD is required as a cofactor.

The protein localises to the cytoplasm. It carries out the reaction UDP-N-acetyl-alpha-D-muramate + NADP(+) = UDP-N-acetyl-3-O-(1-carboxyvinyl)-alpha-D-glucosamine + NADPH + H(+). The protein operates within cell wall biogenesis; peptidoglycan biosynthesis. Its function is as follows. Cell wall formation. This chain is UDP-N-acetylenolpyruvoylglucosamine reductase, found in Staphylococcus aureus (strain MRSA252).